A 121-amino-acid polypeptide reads, in one-letter code: Large ribosomal subunit protein eL8 (121 aa).

This sequence belongs to the eukaryotic ribosomal protein eL8 family. Part of the 50S ribosomal subunit. Probably part of the RNase P complex.

The protein localises to the cytoplasm. Its function is as follows. Multifunctional RNA-binding protein that recognizes the K-turn motif in ribosomal RNA, the RNA component of RNase P, box H/ACA, box C/D and box C'/D' sRNAs. This chain is Large ribosomal subunit protein eL8, found in Thermoplasma volcanium (strain ATCC 51530 / DSM 4299 / JCM 9571 / NBRC 15438 / GSS1).